The chain runs to 251 residues: Spermatogenesis-associated protein 46 (251 aa).

It localises to the nucleus membrane. In terms of biological role, plays a role in spermiogenesis and fertilization. The sequence is that of Spermatogenesis-associated protein 46 (SPATA46) from Macaca fascicularis (Crab-eating macaque).